The following is a 90-amino-acid chain: Auxin-responsive protein SAUR23 (90 aa).

This sequence belongs to the ARG7 family.

It is found in the cell membrane. Its function is as follows. Functions as a positive effector of cell expansion through modulation of auxin transport. This is Auxin-responsive protein SAUR23 from Arabidopsis thaliana (Mouse-ear cress).